Reading from the N-terminus, the 105-residue chain is Large ribosomal subunit protein eL30 (105 aa).

Belongs to the eukaryotic ribosomal protein eL30 family.

In Eremothecium gossypii (strain ATCC 10895 / CBS 109.51 / FGSC 9923 / NRRL Y-1056) (Yeast), this protein is Large ribosomal subunit protein eL30 (RPL30).